Consider the following 247-residue polypeptide: Large ribosomal subunit protein uL30 (247 aa).

Met1 is modified (N-acetylmethionine). 4 tandem repeats follow at residues 7–17 (KKKVPAVPETL), 18–29 (KKKRRNFAELKI), 30–41 (KRLRKKFAQKML), and 42–53 (RKARRKLIYEKA). The 4 X 12 AA tandem repeats stretch occupies residues 7-53 (KKKVPAVPETLKKKRRNFAELKIKRLRKKFAQKMLRKARRKLIYEKA). Phosphothreonine is present on Thr16. Position 123 is an N6-acetyllysine (Lys123). Lys126 is modified (N6-succinyllysine). Residue Tyr138 is modified to Phosphotyrosine.

The protein belongs to the universal ribosomal protein uL30 family. In terms of assembly, component of the large ribosomal subunit. Homodimer. Interacts with DHX33.

The protein resides in the cytoplasm. Component of the large ribosomal subunit. The ribosome is a large ribonucleoprotein complex responsible for the synthesis of proteins in the cell. Binds to G-rich structures in 28S rRNA and in mRNAs. Plays a regulatory role in the translation apparatus; inhibits cell-free translation of mRNAs. This chain is Large ribosomal subunit protein uL30 (RPL7), found in Macaca fascicularis (Crab-eating macaque).